Consider the following 303-residue polypeptide: DnaJ homolog subfamily C member 17 (303 aa).

A J domain is found at aspartate 11–arginine 76. 2 disordered regions span residues glutamate 104–threonine 123 and isoleucine 150–threonine 170. Phosphoserine is present on serine 112. Over residues isoleucine 150–glutamate 166 the composition is skewed to basic and acidic residues. The RRM domain occupies lysine 178–glycine 249. The residue at position 264 (lysine 264) is an N6-methyllysine.

Expressed in the thyroid gland.

The protein resides in the cytoplasm. Its subcellular location is the nucleus. Functionally, may negatively affect PAX8-induced thyroglobulin/TG transcription. The polypeptide is DnaJ homolog subfamily C member 17 (Dnajc17) (Mus musculus (Mouse)).